The following is a 574-amino-acid chain: Septation ring formation regulator EzrA (574 aa).

At 1 to 7 (MSSGIIL) the chain is on the extracellular side. Residues 8-26 (LIVAIVLLVIIAYLVGVII) traverse the membrane as a helical segment. The Cytoplasmic portion of the chain corresponds to 27 to 574 (RKRNDSLITS…YEKTREHIRF (548 aa)). Coiled-coil stretches lie at residues 102 to 141 (NFIR…EEKN), 274 to 350 (ELVT…ETES), and 459 to 520 (QLEA…SFEA).

Belongs to the EzrA family.

The protein resides in the cell membrane. Functionally, negative regulator of FtsZ ring formation; modulates the frequency and position of FtsZ ring formation. Inhibits FtsZ ring formation at polar sites. Interacts either with FtsZ or with one of its binding partners to promote depolymerization. In Streptococcus pyogenes serotype M6 (strain ATCC BAA-946 / MGAS10394), this protein is Septation ring formation regulator EzrA.